The primary structure comprises 855 residues: DNA mismatch repair protein MutS (855 aa).

616–623 (GPNMGGKS) serves as a coordination point for ATP.

This sequence belongs to the DNA mismatch repair MutS family.

Its function is as follows. This protein is involved in the repair of mismatches in DNA. It is possible that it carries out the mismatch recognition step. This protein has a weak ATPase activity. The sequence is that of DNA mismatch repair protein MutS from Salmonella newport (strain SL254).